We begin with the raw amino-acid sequence, 297 residues long: Acetyl-coenzyme A carboxylase carboxyl transferase subunit beta (297 aa).

In terms of domain architecture, CoA carboxyltransferase N-terminal spans 25–294; it reads LWVKCPETGQ…LPPKGRLPRP (270 aa).

The protein belongs to the AccD/PCCB family. In terms of assembly, acetyl-CoA carboxylase is a heterohexamer composed of biotin carboxyl carrier protein (AccB), biotin carboxylase (AccC) and two subunits each of ACCase subunit alpha (AccA) and ACCase subunit beta (AccD).

The protein resides in the cytoplasm. It carries out the reaction N(6)-carboxybiotinyl-L-lysyl-[protein] + acetyl-CoA = N(6)-biotinyl-L-lysyl-[protein] + malonyl-CoA. The protein operates within lipid metabolism; malonyl-CoA biosynthesis; malonyl-CoA from acetyl-CoA: step 1/1. Component of the acetyl coenzyme A carboxylase (ACC) complex. Biotin carboxylase (BC) catalyzes the carboxylation of biotin on its carrier protein (BCCP) and then the CO(2) group is transferred by the transcarboxylase to acetyl-CoA to form malonyl-CoA. This is Acetyl-coenzyme A carboxylase carboxyl transferase subunit beta from Xanthobacter autotrophicus (strain ATCC BAA-1158 / Py2).